The sequence spans 338 residues: E3 ubiquitin-protein ligase RING1 (338 aa).

The interval 102–124 is disordered; it reads TTTSSSASIDPNNPSLSGPTRSG. The segment covering 110-121 has biased composition (polar residues); the sequence is IDPNNPSLSGPT. The RING-type; atypical zinc finger occupies 224–265; sequence CAVCMDDFEEGTEAKQMPCKHLYHKDCLLPWLELHNSCPVCR. Composition is skewed to basic and acidic residues over residues 267–279 and 298–309; these read ELPT…ERRV and SDGDNRTVERSF. Residues 267–338 are disordered; that stretch reads ELPTDDPDYE…NAETRQEDLD (72 aa).

Post-translationally, auto-ubiquitinated as part of the enzymatic reaction. In terms of tissue distribution, mostly expressed in cotton fibers, and, to a lower extent, in leaves and flowers.

The enzyme catalyses S-ubiquitinyl-[E2 ubiquitin-conjugating enzyme]-L-cysteine + [acceptor protein]-L-lysine = [E2 ubiquitin-conjugating enzyme]-L-cysteine + N(6)-ubiquitinyl-[acceptor protein]-L-lysine.. It functions in the pathway protein modification; protein ubiquitination. E3 ubiquitin-protein ligase which accepts ubiquitin from an E2 ubiquitin-conjugating enzyme in the form of a thioester and then directly transfers the ubiquitin to targeted substrates. Promotes polyubiquitination of target proteins. The sequence is that of E3 ubiquitin-protein ligase RING1 (RING1) from Gossypium hirsutum (Upland cotton).